Consider the following 392-residue polypeptide: Formate-dependent phosphoribosylglycinamide formyltransferase (392 aa).

Residues glutamate 22–leucine 23 and glutamate 82 contribute to the N(1)-(5-phospho-beta-D-ribosyl)glycinamide site. Residues arginine 114, lysine 155, serine 160–glutamine 165, glutamate 195–valine 198, and glutamate 203 each bind ATP. Residues arginine 119–leucine 308 enclose the ATP-grasp domain. Residues glutamate 267 and glutamate 279 each coordinate Mg(2+). N(1)-(5-phospho-beta-D-ribosyl)glycinamide is bound by residues aspartate 286, lysine 355, and arginine 362–arginine 363.

The protein belongs to the PurK/PurT family. In terms of assembly, homodimer.

The catalysed reaction is N(1)-(5-phospho-beta-D-ribosyl)glycinamide + formate + ATP = N(2)-formyl-N(1)-(5-phospho-beta-D-ribosyl)glycinamide + ADP + phosphate + H(+). It functions in the pathway purine metabolism; IMP biosynthesis via de novo pathway; N(2)-formyl-N(1)-(5-phospho-D-ribosyl)glycinamide from N(1)-(5-phospho-D-ribosyl)glycinamide (formate route): step 1/1. In terms of biological role, involved in the de novo purine biosynthesis. Catalyzes the transfer of formate to 5-phospho-ribosyl-glycinamide (GAR), producing 5-phospho-ribosyl-N-formylglycinamide (FGAR). Formate is provided by PurU via hydrolysis of 10-formyl-tetrahydrofolate. This chain is Formate-dependent phosphoribosylglycinamide formyltransferase, found in Salmonella typhimurium (strain LT2 / SGSC1412 / ATCC 700720).